We begin with the raw amino-acid sequence, 373 residues long: Alcohol dehydrogenase class-3 (373 aa).

Residue alanine 1 is modified to N-acetylalanine. The Zn(2+) site is built by cysteine 44, histidine 66, cysteine 96, cysteine 99, cysteine 102, cysteine 110, and cysteine 173.

The protein belongs to the zinc-containing alcohol dehydrogenase family. Class-III subfamily. In terms of assembly, homodimer. Zn(2+) is required as a cofactor.

Its subcellular location is the cytoplasm. The catalysed reaction is a primary alcohol + NAD(+) = an aldehyde + NADH + H(+). It catalyses the reaction a secondary alcohol + NAD(+) = a ketone + NADH + H(+). The enzyme catalyses S-(hydroxymethyl)glutathione + NADP(+) = S-formylglutathione + NADPH + H(+). It carries out the reaction S-(hydroxymethyl)glutathione + NAD(+) = S-formylglutathione + NADH + H(+). The catalysed reaction is S-nitrosoglutathione + NADH + H(+) = S-(hydroxysulfenamide)glutathione + NAD(+). Functionally, class-III ADH is remarkably ineffective in oxidizing ethanol, but it readily catalyzes the oxidation of long-chain primary alcohols and the oxidation of S-(hydroxymethyl) glutathione. Also acts as a S-nitroso-glutathione reductase by catalyzing the NADH-dependent reduction of S-nitrosoglutathione, thereby regulating protein S-nitrosylation. The polypeptide is Alcohol dehydrogenase class-3 (Saara hardwickii (Indian spiny-tailed lizard)).